Here is a 205-residue protein sequence, read N- to C-terminus: CD83 antigen (205 aa).

Residues 1-19 form the signal peptide; it reads MSRGLQLLLLSCAYSLAPA. Positions 20 to 114 constitute an Ig-like V-type domain; that stretch reads TPEVKVACSE…YRCTLQDPDG (95 aa). Residues 20-144 lie on the Extracellular side of the membrane; it reads TPEVKVACSE…EETFKKYRAE (125 aa). A disulfide bridge links Cys35 with Cys107. Residues 60–69 show a composition bias toward basic and acidic residues; sequence METPQEDHLR. The interval 60-81 is disordered; the sequence is METPQEDHLRGQHYHQKGQNGS. N-linked (GlcNAc...) asparagine glycosylation is found at Asn79, Asn96, and Asn117. The chain crosses the membrane as a helical span at residues 145 to 166; it reads IVLLLALVIFYLTLIIFTCKFA. Over 167–205 the chain is Cytoplasmic; the sequence is RLQSIFPDFSKAGMERAFLPVTSPNKHLGLVTPHKTELV.

Monomer. Homodimer. Homotrimer. Interacts with MARCHF1; this interaction antagonizes MARCHF1-mediated MHC II and CD86 down-regulation. Glycosylated when expressed on activated dendritic cells. Expressed by activated lymphocytes, Langerhans cells and activatd dendritic cells.

It localises to the membrane. Transmembrane glycoprotein predominantly found on the surface of many immune cells including dendritic cells or lymphocytes that plays various roles in immune response regulation. Plays an essential role in CD4(+) T-selection, differentiation and stability by regulating the activity of the major E3 ubiquitin ligase responsible for controlling MHCII trafficking MARCHF8. Also inhibits MARCHF1 association with MHCII or CD86 to prevent their ubiquitination and subsequent degradation. In addition, acts as an important modulator of protective responses against acute infections. The polypeptide is CD83 antigen (CD83) (Homo sapiens (Human)).